An 852-amino-acid polypeptide reads, in one-letter code: Genome polyprotein (852 aa).

2 short sequence motifs ((L)YPX(n)L motif) span residues 167–171 and 200–205; these read YPHGL and YPVWEL. The tract at residues 766 to 836 is involved in P1-2A pentamerization; sequence MMSRIAAGDL…PRKMKGLFSQ (71 aa).

It belongs to the picornaviridae polyprotein family. In terms of assembly, homodimer. Homomultimer; probably interacts with membranes in a multimeric form. Seems to assemble into amyloid-like fibers. As to quaternary structure, homopentamer. Homooligomer. Interacts with capsid protein VP2. Interacts with capsid protein VP3. In terms of assembly, interacts with capsid protein VP1. Interacts with capsid protein VP3. As to quaternary structure, interacts with capsid protein VP1. Interacts with capsid protein VP2. Specific enzymatic cleavages by viral protease in vivo yield a variety of precursors and mature proteins. Polyprotein processing intermediates are produced, such as P1-2A which is a functional precursor of the structural proteins, VP0 which is a VP4-VP2 precursor, VP1-2A precursor, 3ABC precursor which is a stable and catalytically active precursor of 3A, 3B and 3C proteins, 3AB and 3CD precursors. The assembly signal 2A is removed from VP1-2A by a host protease, possibly host Cathepsin L. This cleavage occurs over a region of 3 amino-acids probably generating VP1 proteins with heterogeneous C-termini. Post-translationally, during virion maturation, immature virions are rendered infectious following cleavage of VP0 into VP4 and VP2. This maturation seems to be an autocatalytic event triggered by the presence of RNA in the capsid and is followed by a conformational change of the particle. In terms of processing, the assembly signal 2A is removed from VP1-2A by a host protease, possibly host Cathepsin L in naked virions. This cleavage does not occur in enveloped virions. This cleavage occurs over a region of 3 amino-acids probably generating VP1 proteins with heterogeneous C-termini. Viral protein genome-linked: VPg is uridylylated prior to priming replication into VPg-pUpU. Post-translationally, unlike other picornaviruses, does not seem to be myristoylated.

The protein localises to the virion. Its subcellular location is the host endosome. It localises to the host multivesicular body. The protein resides in the host membrane. Its function is as follows. Capsid proteins VP1, VP2, and VP3 form a closed capsid enclosing the viral positive strand RNA genome. All these proteins contain a beta-sheet structure called beta-barrel jelly roll. Together they form an icosahedral capsid (T=3) composed of 60 copies of each VP1, VP2, and VP3, with a diameter of approximately 300 Angstroms. VP1 is situated at the 12 fivefold axes, whereas VP2 and VP3 are located at the quasi-sixfold axes. The naked capsid interacts with the host receptor HAVCR1 to provide virion attachment to and probably entry into the target cell. Functionally, VP0 precursor is a component of the immature procapsids. Plays a role in the assembly of the 12 pentamers into an icosahedral structure. Has not been detected in mature virions, supposedly owing to its small size. In terms of biological role, precursor component of immature procapsids that corresponds to an extended form of the structural protein VP1. After maturation, possibly by the host Cathepsin L, the assembly signal 2A is cleaved to give rise to the mature VP1 protein. Its function is as follows. Affects membrane integrity and causes an increase in membrane permeability. Functionally, functions as a viroporin. Affects membrane integrity and causes an increase in membrane permeability. Involved in host intracellular membrane rearrangements probably to give rise to the viral factories. Does not disrupt calcium homeostasis or glycoprotein trafficking. Antagonizes the innate immune response of the host by suppressing IFN-beta synthesis, which it achieves by interfering with the RIG-I/IFIH1 pathway. In Cercopithecus hamlyni (Owl-faced monkey), this protein is Genome polyprotein.